Here is a 544-residue protein sequence, read N- to C-terminus: T-complex protein 1 subunit gamma (544 aa).

An intrachain disulfide couples Cys368 to Cys374. Residues Ser525 to Glu544 are disordered.

The protein belongs to the TCP-1 chaperonin family. Heterooligomeric complex of about 850 to 900 kDa that forms two stacked rings, 12 to 16 nm in diameter.

It localises to the cytoplasm. In terms of biological role, molecular chaperone; assists the folding of proteins upon ATP hydrolysis. Known to play a role, in vitro, in the folding of actin and tubulin. This Drosophila melanogaster (Fruit fly) protein is T-complex protein 1 subunit gamma.